Here is a 362-residue protein sequence, read N- to C-terminus: G-protein coupled receptor 4 (362 aa).

Residues 1 to 8 (MGNRTLEG) lie on the Extracellular side of the membrane. Residue Asn-3 is glycosylated (N-linked (GlcNAc...) asparagine). A helical transmembrane segment spans residues 9 to 45 (CHVDSRMDHLFPPSLYIFVIGVGLPTNCLALWAAYRQ). 2 cysteine pairs are disulfide-bonded: Cys-9/Cys-258 and Cys-90/Cys-168. Residues 46–49 (VRQR) lie on the Cytoplasmic side of the membrane. The chain crosses the membrane as a helical span at residues 50 to 80 (NELGVYLMNLSIADLLYICTLPLWVDYFLHH). The Extracellular segment spans residues 81-85 (DNWIH). The helical transmembrane segment at 86–121 (GPGSCKLFGFIFYTNIYISIAFLCCISVDRYLAVAH) threads the bilayer. Over 122–129 (PLRFARLR) the chain is Cytoplasmic. The chain crosses the membrane as a helical span at residues 130–156 (RVKTAVAVSSVVWATELGANSAPLFHD). Topologically, residues 157 to 172 (ELFRDRYNHTFCFEKF) are extracellular. The extracellular loop 2 (ECL2) stretch occupies residues 157–172 (ELFRDRYNHTFCFEKF). N-linked (GlcNAc...) asparagine glycosylation occurs at Asn-164. Residues 173 to 210 (PMEGWVAWMNLYRVFVGFLFPWALMLLSYRGILRAVRG) form a helical membrane-spanning segment. Residues 211–214 (SVST) lie on the Cytoplasmic side of the membrane. The chain crosses the membrane as a helical span at residues 215-250 (ERQEKVKIKRLALSLIAIVLVCFAPYHVLLLSRSAV). Residues 251-260 (YLRRPRDCGF) lie on the Extracellular side of the membrane. The helical transmembrane segment at 261 to 289 (EERVFSAYHSSLAFTSLNCVADPILYCLV) threads the bilayer. Topologically, residues 290 to 362 (NEGARSDVAK…VQLKMLPPAQ (73 aa)) are cytoplasmic.

It belongs to the G-protein coupled receptor 1 family.

The protein localises to the cell membrane. Activated by a network of residues that connects an extracellular-facing cavity to Glu-145, a conserved charged residue buried in the transmembrane core of the receptor. Protonation likely drives conformational changes in extracellular loop 2 (ECL2), which stabilizes movement of transmembrane 3 (TM3) and a series of rearrangements that connect the extracellular-facing cavity to Glu-145, a residue only conserved in proton-sensing G-protein coupled receptors. In terms of biological role, proton-sensing G-protein coupled receptor activated by extracellular pH, which is required to monitor pH changes and generate adaptive reactions. Activated by an optimal pH of 6.8-7.2. Ligand binding causes a conformation change that triggers signaling via guanine nucleotide-binding proteins (G proteins) and modulates the activity of downstream effectors, such as adenylate cyclase. GPR4 is mainly coupled to G(s) G proteins and mediates activation of adenylate cyclase activity. May also couple with G(q) and G(12)/G(13) G proteins. Acts as a key regulator of respiratory sensitivity to CO2/H(+) in brain retrotrapezoid nucleus neurons: acts by mediating detection of protons generated by the formation of carbonic acid in the blood, an important mechanism to impulse to breathe. Also acts as a regulator of acid secretion in the kidney collecting duct by maintaining acid-base homeostasis in the kidney. Acidosis-induced GPR4 activation increases paracellular gap formation and permeability of vascular endothelial cells, possibly through the G(12)/G(13)/Rho GTPase signaling pathway. The sequence is that of G-protein coupled receptor 4 (GPR4) from Bos taurus (Bovine).